Reading from the N-terminus, the 1824-residue chain is Afadin (1824 aa).

Residues 39–133 (FHGVMRFYFQ…GRFVLKNEND (95 aa)) enclose the Ras-associating 1 domain. Residues 128–194 (LKNENDAIPP…DRPFQGEDVE (67 aa)) are disordered. Residues 146 to 185 (EKQEKEGVIQNFKRTLSKKEKKEKKKREKEALRQASDKDD) adopt a coiled-coil conformation. A compositionally biased stretch (basic residues) spans 160–172 (TLSKKEKKEKKKR). Over residues 173-189 (EKEALRQASDKDDRPFQ) the composition is skewed to basic and acidic residues. 3 positions are modified to phosphoserine: Ser-216, Ser-246, and Ser-256. Residues 246–348 (SGGTLRIYAD…LVFQLKRRPP (103 aa)) enclose the Ras-associating 2 domain. The span at 349-371 (DHIPKKTKKHLEGKTPKGKERAD) shows a compositional bias: basic and acidic residues. The interval 349 to 378 (DHIPKKTKKHLEGKTPKGKERADGSGYGST) is disordered. A phosphoserine mark is found at Ser-391 and Ser-424. In terms of domain architecture, FHA spans 426 to 492 (TEVGTEKLDD…LQSGMKVQFG (67 aa)). 5 positions are modified to phosphoserine: Ser-512, Ser-557, Ser-562, Ser-589, and Ser-655. The interval 534–595 (FDLGGDIHSG…RQESRTQDAS (62 aa)) is disordered. A compositionally biased stretch (basic and acidic residues) spans 580 to 591 (QQPDYRRQESRT). In terms of domain architecture, Dilute spans 668 to 908 (NKMVSMMEGV…IENVVTVAEN (241 aa)). A PDZ domain is found at 1007–1093 (IITVTLKKQN…VVTLEVAKQG (87 aa)). Phosphoserine is present on residues Ser-1083, Ser-1107, Ser-1126, Ser-1140, Ser-1143, Ser-1172, Ser-1173, Ser-1182, and Ser-1199. The segment at 1107–1223 (SPMMQRISDR…PRPEAYPIPT (117 aa)) is disordered. The span at 1113–1128 (ISDRRGSGKPRPKSEG) shows a compositional bias: basic and acidic residues. Residues 1132 to 1143 (YNNSTQNGSPES) show a composition bias toward polar residues. Residues 1152–1172 (SEPKKLPGDDRLMKNRADHRS) are compositionally biased toward basic and acidic residues. The span at 1190-1210 (ASGTTAKITSVSTGNLCTEEQ) shows a compositional bias: polar residues. Phosphothreonine is present on residues Thr-1211 and Thr-1232. Disordered regions lie at residues 1235-1473 (ASKS…LQRP), 1501-1528 (SKEELSSGDSLSPDPWKRDAKEKLEKQQ), and 1569-1824 (RLQE…LNTK). Ser-1238 carries the post-translational modification Phosphoserine. Composition is skewed to basic and acidic residues over residues 1252–1262 (YEEKPHMHTDS) and 1274–1302 (RSQEELREDKAYQLERHRIEAAMDRKSDS). Ser-1275 is modified (phosphoserine). Residues 1309 to 1318 (SSSLDSSTSS) show a composition bias toward low complexity. Residues 1325 to 1337 (SSKSVTPASTLTK) are compositionally biased toward polar residues. Ser-1328 is modified (phosphoserine). Thr-1330 is modified (phosphothreonine). Residues 1345–1356 (TPAAIPATPVAV) show a composition bias toward low complexity. Over residues 1364 to 1373 (LPPPPPPPPV) the composition is skewed to pro residues. The segment covering 1407–1441 (AERRKREEHQRWYEKEKARLEEERERKRREQERKL) has biased composition (basic and acidic residues). A coiled-coil region spans residues 1408 to 1448 (ERRKREEHQRWYEKEKARLEEERERKRREQERKLGQMRTQS). Phosphoserine occurs at positions 1501 and 1512. A compositionally biased stretch (basic and acidic residues) spans 1515–1528 (PWKRDAKEKLEKQQ). Positions 1523 to 1667 (KLEKQQQMHI…SRLEAERRRQ (145 aa)) form a coiled coil. The segment covering 1578 to 1589 (EDDEEEEDDDVD) has biased composition (acidic residues). Residues 1597 to 1677 (LEAERRARLQ…HDEAARRLLE (81 aa)) are compositionally biased toward basic and acidic residues. Over residues 1694–1709 (PPSPSPAPGAPPPPPQ) the composition is skewed to pro residues. Residues Ser-1696, Ser-1721, Ser-1774, Ser-1779, and Ser-1799 each carry the phosphoserine modification. The span at 1762 to 1776 (DACRDAKEKRSKSQD) shows a compositional bias: basic and acidic residues. The residue at position 1807 (Lys-1807) is an N6-acetyllysine. Positions 1813–1824 (KLTELENELNTK) are enriched in basic and acidic residues.

Homodimer. Interacts with F-actin, nectin and NECTIN3. Essential for the association of nectin and E-cadherin. Isoform 1/s-afadin does not interact with F-actin. Interacts with ZO-1 and occludin, but probably in an indirect manner. Interacts with RIT1 and RIT2. Interacts with NRXN1 and BCR. Interacts with ADAM10; the interaction locks ADAM10 at adherens junctions following ADAM10 recruitment to adherens junctions by TSPAN33.

It is found in the cell junction. It localises to the adherens junction. Belongs to an adhesion system, probably together with the E-cadherin-catenin system, which plays a role in the organization of homotypic, interneuronal and heterotypic cell-cell adherens junctions (AJs). Nectin- and actin-filament-binding protein that connects nectin to the actin cytoskeleton. May play a key role in the organization of epithelial structures of the embryonic ectoderm. Essential for the organization of adherens junctions. This is Afadin from Homo sapiens (Human).